Reading from the N-terminus, the 534-residue chain is Calmodulin calcium-dependent NAD kinase (534 aa).

Residues 167 to 196 are calmodulin-binding; sequence QKVPKLKDFVMAATRKQRFERVTKDLKVKR. Residue 238 to 245 participates in ATP binding; sequence GGMGAGKS.

As to quaternary structure, interacts with calmodulin (CaM) in a calcium Ca(2+)-dependent manner in vitro. The cofactor is Ca(2+).

The protein localises to the mitochondrion outer membrane. The enzyme catalyses NAD(+) + ATP = ADP + NADP(+) + H(+). Functionally, phosphorylates NAD(+) to produce NADP(+) in a calmodulin calcium-dependent manner. Does not possess activity toward NADH. Has broad specificity for the phosphoryl donor, as ATP, CTP, GTP and UTP can be used interchangeably and produce similar efficiencies. May play a role in producing NADP(H) needed to regulate the elicitor-induced reactive oxygen species (ROS) burst by sustaining the activity of NADPH oxidases. Does not seem to play a role in photosynthesis-driven growth. This is Calmodulin calcium-dependent NAD kinase from Arabidopsis thaliana (Mouse-ear cress).